Reading from the N-terminus, the 87-residue chain is Exodeoxyribonuclease 7 small subunit (87 aa).

This sequence belongs to the XseB family. In terms of assembly, heterooligomer composed of large and small subunits.

The protein resides in the cytoplasm. The catalysed reaction is Exonucleolytic cleavage in either 5'- to 3'- or 3'- to 5'-direction to yield nucleoside 5'-phosphates.. Its function is as follows. Bidirectionally degrades single-stranded DNA into large acid-insoluble oligonucleotides, which are then degraded further into small acid-soluble oligonucleotides. This Pelotomaculum thermopropionicum (strain DSM 13744 / JCM 10971 / SI) protein is Exodeoxyribonuclease 7 small subunit.